A 594-amino-acid polypeptide reads, in one-letter code: P-granule-associated novel protein 1 (594 aa).

The N-terminal stretch at 1 to 18 is a signal peptide; sequence MRSLLSFVLLALARIAIS. The Extracellular portion of the chain corresponds to 19 to 513; sequence EETKSCIDIE…PEEEEVYRSG (495 aa). 15 LRR repeats span residues 78–101, 103–124, 125–149, 150–173, 175–197, 198–221, 222–245, 246–269, 271–290, 291–315, 318–341, 343–365, 374–397, 399–419, and 420–442; these read GTEL…LFEN, FAKQ…SFQS, LGGS…LFTG, LKSL…AFEE, KKVE…TFDG, MKNL…AFRG, LNSL…IFSA, LKNL…SFPK, EKLV…KLKD, LPSL…MFGL, SDRI…AFQH, PNLI…SPSQ, LKKL…ELPK, LSSL…ALEG, and MEIK…TFDS. Residues 514–534 traverse the membrane as a helical segment; that stretch reads WITVAATILTIVTIVIMVIIA. The Cytoplasmic segment spans residues 535 to 594; the sequence is MLYFKDARYQFPLRGRRSDSDLHKLIENDPLNIASDSILVVPAMPKRNTGPKKTVRFQNF.

As to quaternary structure, interacts with glh-1. Interacts (via LRR regions) with myrf-1 (via C-terminus); the interaction promotes the role of myrf-1 in the synaptic remodeling of DD GABAergic motor neurons at the cell membrane. As to expression, expressed in the germline and somatic cells. Expressed in the germline and somatic cells. Expressed at higher levels in germline cells relative to somatic cells. In terms of tissue distribution, expressed in germline cells. As to expression, highly expressed in the pharynx and at lower levels in the intestine, but not detected in other tissues. Other studies suggest a broader expression pattern in somatic tissues: from embryogenesis to adult stages, expressed strongly in body wall muscle, vulva, somatic gonad and pharynx, at lower levels in the nerve ring, hypodermis, and rectal epithelia, and very weakly in the intestine.

It is found in the cytoplasm. The protein resides in the apical cell membrane. Its function is as follows. Regulates diverse developmental processes including larval molting and gonad maturation. Functionally, promotes the localization of myrf-1 and myrf-2 to the cell membrane. In association with myrf-1, promotes the synaptic remodeling of DD GABAergic motor neurons whereby new synapses form in the dorsal processes of DD neurons. In Caenorhabditis elegans, this protein is P-granule-associated novel protein 1.